Reading from the N-terminus, the 528-residue chain is Peptide chain release factor 3 (528 aa).

Positions 10–279 (AKRRTFAIIS…GLVEWAPAPM (270 aa)) constitute a tr-type G domain. Residues 19 to 26 (SHPDAGKT), 87 to 91 (DTPGH), and 141 to 144 (NKLD) each bind GTP.

It belongs to the TRAFAC class translation factor GTPase superfamily. Classic translation factor GTPase family. PrfC subfamily.

Its subcellular location is the cytoplasm. Functionally, increases the formation of ribosomal termination complexes and stimulates activities of RF-1 and RF-2. It binds guanine nucleotides and has strong preference for UGA stop codons. It may interact directly with the ribosome. The stimulation of RF-1 and RF-2 is significantly reduced by GTP and GDP, but not by GMP. This chain is Peptide chain release factor 3, found in Escherichia coli O1:K1 / APEC.